A 98-amino-acid chain; its full sequence is NADH-ubiquinone oxidoreductase chain 4L (98 aa).

The next 3 helical transmembrane spans lie at 1 to 21 (MSMV…GLLM), 29 to 49 (SLLC…MTIL), and 61 to 81 (IILL…LVMV).

Belongs to the complex I subunit 4L family. As to quaternary structure, core subunit of respiratory chain NADH dehydrogenase (Complex I) which is composed of 45 different subunits.

Its subcellular location is the mitochondrion inner membrane. It carries out the reaction a ubiquinone + NADH + 5 H(+)(in) = a ubiquinol + NAD(+) + 4 H(+)(out). Functionally, core subunit of the mitochondrial membrane respiratory chain NADH dehydrogenase (Complex I) which catalyzes electron transfer from NADH through the respiratory chain, using ubiquinone as an electron acceptor. Part of the enzyme membrane arm which is embedded in the lipid bilayer and involved in proton translocation. This is NADH-ubiquinone oxidoreductase chain 4L (MT-ND4L) from Phocarctos hookeri (Hooker's sea lion).